The primary structure comprises 713 residues: MQLLNFLICLFFIFKRCVFTVIGGEFSYDNIDKKPILVASYPEGSRFNVSASIKTLPDLVTLTFPKLVKDPGYVYEEAEKGDPESQFLIAMLYAMGPDERLGLSFPRNEPLSRIFLELSATQNYTYALLALAYKHLNGLSTPMSVDKGVELYKQVAHQISCLVQPLSHFAPDIAAEYPVDLYDLSRTSSYSVQKKDDIVEYLKDYALRGNNISAHISLATIYQYGTPGKLKDIKLAVKHYLAAIRLVNSGIPDSPSEAIKSIHNNPRHAPTTKETANSLSIAAFRLGCMALHGELGKPDPSLAYAWFEYGVSLNHSSSKAAIAYMYFMGYPVAENTESITKLLENALASNDPLAFAVAGKVSLANGQIDEATVHLIRAVSNGHLESVLHIADIYYGSNNQLSIAYYENFISRVLELFDVKTISFDPLTRHFAHRLSAELGNLMSQILAAKDRDPSTSYLKTVIFPTNEQTHRNARIAMNYYSRAAARNHIHSLIKIGDFYRMGLGTSAKPELAFSYYSQAAAIHPSALAYWRLGWMHEYGVGVPVDFEMAKKNYDNALMHDTRAFLAVTLARLRMRLSSPDSWFSNIYRILGKVTYKFLKLVQYFIINIFDILSPAGPDSQLPPEPPTLQVDRTPQQPDPQETSESLPSPNTEEMGESYNDIRFTYDYIDGRFLETACVTLIVVVVGLVLMRRHQQHRLQERRERIIRRQNRA.

Residues 1–20 (MQLLNFLICLFFIFKRCVFT) form the signal peptide. N-linked (GlcNAc...) asparagine glycans are attached at residues asparagine 48 and asparagine 123. 2 Sel1-like repeats span residues 83 to 124 (PESQ…TQNY) and 125 to 160 (TYAL…HQIS). Asparagine 211 carries an N-linked (GlcNAc...) asparagine glycan. Sel1-like repeat units follow at residues 212 to 248 (ISAH…RLVN), 280 to 315 (SIAA…SLNH), 490 to 525 (IHSL…AIHP), and 527 to 562 (ALAY…MHDT). N-linked (GlcNAc...) asparagine glycosylation is present at asparagine 314. The interval 621 to 655 (QLPPEPPTLQVDRTPQQPDPQETSESLPSPNTEEM) is disordered. Residues 631-652 (VDRTPQQPDPQETSESLPSPNT) show a composition bias toward polar residues. The helical transmembrane segment at 671-691 (GRFLETACVTLIVVVVGLVLM) threads the bilayer.

It belongs to the sel-1 family.

It is found in the endoplasmic reticulum membrane. Functionally, component of the endoplasmic reticulum quality control (ERQC) system involved in ubiquitin-dependent degradation of missfolded endoplasmic reticulum proteins. The polypeptide is Putative ERAD-associated E3 ubiquitin-protein ligase component (Schizosaccharomyces pombe (strain 972 / ATCC 24843) (Fission yeast)).